Here is a 202-residue protein sequence, read N- to C-terminus: Translation initiation factor 2 subunit beta (202 aa).

Residues 145-202 form the TRAM domain; that stretch reads AIEEGGTYELRIDAVGSKGDGIAKIDKYTVFVPGATKGDVVKVKIKKISGNLAFSERA.

The protein belongs to the eIF-2-beta/eIF-5 family. Heterotrimer composed of an alpha, a beta and a gamma chain.

In terms of biological role, eIF-2 functions in the early steps of protein synthesis by forming a ternary complex with GTP and initiator tRNA. This Methanosarcina mazei (strain ATCC BAA-159 / DSM 3647 / Goe1 / Go1 / JCM 11833 / OCM 88) (Methanosarcina frisia) protein is Translation initiation factor 2 subunit beta (eif2b).